We begin with the raw amino-acid sequence, 164 residues long: Outer membrane protein assembly factor BamE (164 aa).

The signal sequence occupies residues 1–19 (MHAFFPRLLLLLLFLPLTH). The disordered stretch occupies residues 111–164 (PAFSESEPAQNFFSPEQTFTPAPDTDSNMNEEPDKKGTVNFLKENQTNFYKDNQ). 2 stretches are compositionally biased toward polar residues: residues 117-140 (EPAQ…SNMN) and 153-164 (KENQTNFYKDNQ).

It belongs to the BamE family. Part of the Bam complex.

Its subcellular location is the cell outer membrane. Functionally, part of the outer membrane protein assembly complex, which is involved in assembly and insertion of beta-barrel proteins into the outer membrane. The chain is Outer membrane protein assembly factor BamE from Nitrosomonas europaea (strain ATCC 19718 / CIP 103999 / KCTC 2705 / NBRC 14298).